The primary structure comprises 320 residues: ATP-dependent 6-phosphofructokinase (320 aa).

Glycine 12 is an ATP binding site. ADP-binding positions include 22–26 (RGVVR) and 55–60 (RYSVSD). ATP contacts are provided by residues 73–74 (RF) and 103–106 (GDGS). Mg(2+) is bound at residue aspartate 104. 126–128 (TID) serves as a coordination point for substrate. Catalysis depends on aspartate 128, which acts as the Proton acceptor. An ADP-binding site is contributed by arginine 155. Residues arginine 163 and 170-172 (MGR) contribute to the substrate site. Residues 186–188 (GCE), lysine 212, and 214–216 (KKH) each bind ADP. Substrate is bound by residues glutamate 223, arginine 244, and 250–253 (HIQR).

It belongs to the phosphofructokinase type A (PFKA) family. ATP-dependent PFK group I subfamily. Prokaryotic clade 'B1' sub-subfamily. Homotetramer. Mg(2+) serves as cofactor.

It localises to the cytoplasm. It carries out the reaction beta-D-fructose 6-phosphate + ATP = beta-D-fructose 1,6-bisphosphate + ADP + H(+). It participates in carbohydrate degradation; glycolysis; D-glyceraldehyde 3-phosphate and glycerone phosphate from D-glucose: step 3/4. Its activity is regulated as follows. Allosterically activated by ADP and other diphosphonucleosides, and allosterically inhibited by phosphoenolpyruvate. Its function is as follows. Catalyzes the phosphorylation of D-fructose 6-phosphate to fructose 1,6-bisphosphate by ATP, the first committing step of glycolysis. This chain is ATP-dependent 6-phosphofructokinase, found in Serratia proteamaculans (strain 568).